A 546-amino-acid chain; its full sequence is T-complex protein 1 subunit zeta (546 aa).

S2 is subject to N-acetylserine. S249 is modified (phosphoserine).

It belongs to the TCP-1 chaperonin family. As to quaternary structure, heterooligomeric complex of about 850 to 900 kDa that forms two stacked rings, 12 to 16 nm in diameter.

Its subcellular location is the cytoplasm. Its function is as follows. Molecular chaperone; assists the folding of proteins upon ATP hydrolysis. Known to play a role, in vitro, in the folding of actin and tubulin. In yeast may play a role in mitotic spindle formation. The sequence is that of T-complex protein 1 subunit zeta (CCT6) from Saccharomyces cerevisiae (strain ATCC 204508 / S288c) (Baker's yeast).